Reading from the N-terminus, the 457-residue chain is ATP synthase subunit beta (457 aa).

147-154 (GGAGVGKT) provides a ligand contact to ATP.

The protein belongs to the ATPase alpha/beta chains family. F-type ATPases have 2 components, CF(1) - the catalytic core - and CF(0) - the membrane proton channel. CF(1) has five subunits: alpha(3), beta(3), gamma(1), delta(1), epsilon(1). CF(0) has three main subunits: a(1), b(2) and c(9-12). The alpha and beta chains form an alternating ring which encloses part of the gamma chain. CF(1) is attached to CF(0) by a central stalk formed by the gamma and epsilon chains, while a peripheral stalk is formed by the delta and b chains.

It localises to the cell inner membrane. It carries out the reaction ATP + H2O + 4 H(+)(in) = ADP + phosphate + 5 H(+)(out). Its function is as follows. Produces ATP from ADP in the presence of a proton gradient across the membrane. The catalytic sites are hosted primarily by the beta subunits. This chain is ATP synthase subunit beta, found in Haemophilus ducreyi (strain 35000HP / ATCC 700724).